A 267-amino-acid polypeptide reads, in one-letter code: Acyl-[acyl-carrier-protein]--UDP-N-acetylglucosamine O-acyltransferase (267 aa).

Belongs to the transferase hexapeptide repeat family. LpxA subfamily. As to quaternary structure, homotrimer.

Its subcellular location is the cytoplasm. The catalysed reaction is a (3R)-hydroxyacyl-[ACP] + UDP-N-acetyl-alpha-D-glucosamine = a UDP-3-O-[(3R)-3-hydroxyacyl]-N-acetyl-alpha-D-glucosamine + holo-[ACP]. It participates in glycolipid biosynthesis; lipid IV(A) biosynthesis; lipid IV(A) from (3R)-3-hydroxytetradecanoyl-[acyl-carrier-protein] and UDP-N-acetyl-alpha-D-glucosamine: step 1/6. Its function is as follows. Involved in the biosynthesis of lipid A, a phosphorylated glycolipid that anchors the lipopolysaccharide to the outer membrane of the cell. In Cupriavidus taiwanensis (strain DSM 17343 / BCRC 17206 / CCUG 44338 / CIP 107171 / LMG 19424 / R1) (Ralstonia taiwanensis (strain LMG 19424)), this protein is Acyl-[acyl-carrier-protein]--UDP-N-acetylglucosamine O-acyltransferase.